The sequence spans 465 residues: Sodium-dependent phosphate transport protein 1 (465 aa).

Residues Asn39, Asn47, and Asn56 are each glycosylated (N-linked (GlcNAc...) asparagine). A run of 10 helical transmembrane segments spans residues 79–99, 117–137, 176–196, 199–219, 260–280, 299–319, 337–357, 363–383, 399–419, and 431–451; these read GLVL…VGYL, SVLS…VIVC, FVMG…LLGW, VFYI…ILLF, LPLW…NLLV, GLLS…AGQM, LFTT…LYLS, TVIF…GQLI, VTAL…GLIL, and FFLM…FAKG.

It belongs to the major facilitator superfamily. Sodium/anion cotransporter family. In terms of assembly, interacts with PDZK1.

It is found in the apical cell membrane. The enzyme catalyses 3 Na(+)(out) + phosphate(out) = 3 Na(+)(in) + phosphate(in). It catalyses the reaction urate(out) = urate(in). Its function is as follows. Important for the resorption of phosphate by the kidney. May be involved in actively transporting phosphate into cells via Na(+) cotransport in the renal brush border membrane. Plays a role in urate transport in the kidney. In Rattus norvegicus (Rat), this protein is Sodium-dependent phosphate transport protein 1 (Slc17a1).